The following is a 142-amino-acid chain: Large ribosomal subunit protein uL13 (142 aa).

This sequence belongs to the universal ribosomal protein uL13 family. Part of the 50S ribosomal subunit.

Its function is as follows. This protein is one of the early assembly proteins of the 50S ribosomal subunit, although it is not seen to bind rRNA by itself. It is important during the early stages of 50S assembly. In Janthinobacterium sp. (strain Marseille) (Minibacterium massiliensis), this protein is Large ribosomal subunit protein uL13.